We begin with the raw amino-acid sequence, 334 residues long: Syntaxin-18 (334 aa).

The Cytoplasmic portion of the chain corresponds to 1-308; the sequence is MAVDITLLFR…EDIREAIKNN (308 aa). Disordered stretches follow at residues 29–50 and 166–225; these read GGADGSRDELFRRSPRPKGDFS and LSKL…GEDE. Basic and acidic residues-rich tracts occupy residues 33–50 and 166–182; these read GSRDELFRRSPRPKGDFS and LSKLEPEPHTKRKDSTS. Residues 183–192 are compositionally biased toward polar residues; the sequence is EKAPQNASQD. Residues 193 to 207 show a composition bias toward basic and acidic residues; it reads SEGKPAAEELPEKPL. Positions 242-304 constitute a t-SNARE coiled-coil homology domain; that stretch reads IGEMNSLFDE…KEGNEDIREA (63 aa). A helical; Anchor for type IV membrane protein membrane pass occupies residues 309–329; that stretch reads AGFRVWILFFLVMCSFSLLFL. At 330–334 the chain is on the lumenal side; it reads DWYDS.

The protein belongs to the syntaxin family. In terms of assembly, component of a SNARE complex consisting of STX18, USE1L, BNIP1/SEC20L, and SEC22B. RINT1/TIP20L and ZW10 are associated with the complex through interaction with BNIP1/SEC20L. Interacts directly with USE1L and BNIP1/SEC20L.

The protein localises to the endoplasmic reticulum membrane. It is found in the golgi apparatus membrane. In terms of biological role, syntaxin that may be involved in targeting and fusion of Golgi-derived retrograde transport vesicles with the ER. This Mus musculus (Mouse) protein is Syntaxin-18 (Stx18).